The chain runs to 541 residues: Glucose-6-phosphate isomerase (541 aa).

The active-site Proton donor is the Glu-346. Residues His-377 and Lys-506 contribute to the active site.

The protein belongs to the GPI family.

The protein localises to the cytoplasm. It carries out the reaction alpha-D-glucose 6-phosphate = beta-D-fructose 6-phosphate. It participates in carbohydrate biosynthesis; gluconeogenesis. It functions in the pathway carbohydrate degradation; glycolysis; D-glyceraldehyde 3-phosphate and glycerone phosphate from D-glucose: step 2/4. Catalyzes the reversible isomerization of glucose-6-phosphate to fructose-6-phosphate. The polypeptide is Glucose-6-phosphate isomerase (Sinorhizobium medicae (strain WSM419) (Ensifer medicae)).